The chain runs to 91 residues: Small ribosomal subunit protein uS19 (91 aa).

The protein belongs to the universal ribosomal protein uS19 family.

Protein S19 forms a complex with S13 that binds strongly to the 16S ribosomal RNA. This is Small ribosomal subunit protein uS19 from Psychrobacter sp. (strain PRwf-1).